Consider the following 480-residue polypeptide: NADH-quinone oxidoreductase subunit N 1 (480 aa).

The next 14 helical transmembrane spans lie at 12–32 (LSMP…IGVF), 38–58 (TPTV…WLVL), 78–98 (FMKV…VGHA), 106–126 (FEFP…ISAN), 128–148 (LISL…VAAI), 163–183 (FVLG…VYGF), 203–223 (LGLV…ISAV), 241–261 (TAFF…RIVI), 271–291 (WQQI…FAAI), 303–323 (SSIG…MAGV), 326–346 (VILY…CILA), 372–392 (ATVL…AGFF), 396–416 (FVFV…GVLA), and 449–469 (LVFG…GPLG).

Belongs to the complex I subunit 2 family. In terms of assembly, NDH-1 is composed of 14 different subunits. Subunits NuoA, H, J, K, L, M, N constitute the membrane sector of the complex.

It is found in the cell inner membrane. The catalysed reaction is a quinone + NADH + 5 H(+)(in) = a quinol + NAD(+) + 4 H(+)(out). In terms of biological role, NDH-1 shuttles electrons from NADH, via FMN and iron-sulfur (Fe-S) centers, to quinones in the respiratory chain. The immediate electron acceptor for the enzyme in this species is believed to be ubiquinone. Couples the redox reaction to proton translocation (for every two electrons transferred, four hydrogen ions are translocated across the cytoplasmic membrane), and thus conserves the redox energy in a proton gradient. The sequence is that of NADH-quinone oxidoreductase subunit N 1 from Rhizobium meliloti (strain 1021) (Ensifer meliloti).